A 798-amino-acid polypeptide reads, in one-letter code: Phenylalanine--tRNA ligase beta subunit (798 aa).

Residues 39–148 enclose the tRNA-binding domain; it reads SKHLGGFVVG…VTLAVGASLL (110 aa). The B5 domain occupies 401–476; it reads DWQKSIVLRP…RINGYDNIPA (76 aa). 4 residues coordinate Mg(2+): Asp454, Asp460, Glu463, and Glu464. In terms of domain architecture, FDX-ACB spans 704-797; it reads SALQPLDRDF…VAKATGGELR (94 aa).

This sequence belongs to the phenylalanyl-tRNA synthetase beta subunit family. Type 1 subfamily. As to quaternary structure, tetramer of two alpha and two beta subunits. Mg(2+) serves as cofactor.

Its subcellular location is the cytoplasm. The enzyme catalyses tRNA(Phe) + L-phenylalanine + ATP = L-phenylalanyl-tRNA(Phe) + AMP + diphosphate + H(+). In Paramagnetospirillum magneticum (strain ATCC 700264 / AMB-1) (Magnetospirillum magneticum), this protein is Phenylalanine--tRNA ligase beta subunit.